The primary structure comprises 952 residues: UPF0182 protein SRU_2225 (952 aa).

7 helical membrane-spanning segments follow: residues 12-32 (ILLG…GLVV), 52-72 (AQVL…GGNF), 109-129 (LGYV…SGRW), 168-188 (AVVG…VIAG), 207-227 (LGAN…LDLY), 247-267 (VVIP…GLVG), and 277-297 (LLGI…VLAP). A disordered region spans residues 917–952 (VPLPDTTGTVPPPTSSDTTGTMTAPTGDVSEVTGGS). Positions 931-940 (SSDTTGTMTA) are enriched in polar residues.

It belongs to the UPF0182 family.

The protein resides in the cell membrane. This Salinibacter ruber (strain DSM 13855 / M31) protein is UPF0182 protein SRU_2225.